The chain runs to 631 residues: ATP-dependent RNA helicase mrh4, mitochondrial (631 aa).

The N-terminal 45 residues, 1 to 45 (MNRLGRLPLPLPPSVCLFCQSRATTPLPPSLQATRSMATARLRRR), are a transit peptide targeting the mitochondrion. The interval 68–111 (KERFGPFAGMNQTEARIRDKPRTRSRAAQKRSGEPEEDSQKESP) is disordered. Residues 98–108 (RSGEPEEDSQK) are compositionally biased toward basic and acidic residues. A Q motif motif is present at residues 141–174 (TSFDQFQLLPVVRNSISSQALPGLVDVTPTPIQR). Basic and acidic residues predominate over residues 180–193 (LLEEPKTEKKPTKA). Residues 180 to 199 (LLEEPKTEKKPTKADDDEPQ) are disordered. The 213-residue stretch at 194 to 406 (DDDEPQYDQY…RKRYPDIKRL (213 aa)) folds into the Helicase ATP-binding domain. 207 to 214 (AETGSGKT) lines the ATP pocket. A disordered region spans residues 229 to 249 (EARDKELEKKEQEEKAREREE). The DEAD box motif lies at 353–356 (DEAD). The region spanning 455 to 631 (GPYASYVAPK…EGMFRGQALI (177 aa)) is the Helicase C-terminal domain.

This sequence belongs to the DEAD box helicase family. MRH4 subfamily.

It localises to the mitochondrion. The enzyme catalyses ATP + H2O = ADP + phosphate + H(+). In terms of biological role, ATP-binding RNA helicase involved in mitochondrial RNA metabolism. Required for maintenance of mitochondrial DNA. The protein is ATP-dependent RNA helicase mrh4, mitochondrial (mrh4) of Neosartorya fischeri (strain ATCC 1020 / DSM 3700 / CBS 544.65 / FGSC A1164 / JCM 1740 / NRRL 181 / WB 181) (Aspergillus fischerianus).